The sequence spans 365 residues: Peptide chain release factor 2 (365 aa).

Gln-252 carries the post-translational modification N5-methylglutamine.

Belongs to the prokaryotic/mitochondrial release factor family. Methylated by PrmC. Methylation increases the termination efficiency of RF2.

It is found in the cytoplasm. Peptide chain release factor 2 directs the termination of translation in response to the peptide chain termination codons UGA and UAA. The protein is Peptide chain release factor 2 of Shewanella baltica (strain OS223).